We begin with the raw amino-acid sequence, 1109 residues long: Ankyrin repeat- and BTB/POZ domain-containing protein 3 (1109 aa).

A helical transmembrane segment spans residues 168–188; sequence IVLSWGLAAHCTAAALAALSL. The interval 260 to 302 is disordered; the sequence is SCSGPGPGSSSGSGPGPGSGPGAPAADKERETPGGGAASGGPC. Over residues 264–280 the composition is skewed to gly residues; it reads PGPGSSSGSGPGPGSGP. ANK repeat units follow at residues 608–637, 654–683, 692–721, 735–764, and 830–859; these read QGMT…DLNV, RHWT…KVEG, YSET…DPLI, GDMN…KEKS, and TWLE…TIQE. The region spanning 928-994 is the BTB domain; it reads SDVTFLVEGR…LYYGGPESLL (67 aa).

It localises to the membrane. The chain is Ankyrin repeat- and BTB/POZ domain-containing protein 3 (Abtb3) from Mus musculus (Mouse).